A 328-amino-acid chain; its full sequence is Sterol-4-alpha-carboxylate 3-dehydrogenase, decarboxylating (328 aa).

Y145 serves as the catalytic Proton acceptor. K149 provides a ligand contact to NAD(+). Residues 259–279 (LHMVLPTPIALSLVWIMALIW) form a helical membrane-spanning segment.

The protein belongs to the 3-beta-HSD family. Homodimer.

The protein localises to the endoplasmic reticulum membrane. It localises to the lipid droplet. It carries out the reaction a 3beta-hydroxysteroid-4alpha-carboxylate + NADP(+) = a 3-oxosteroid + CO2 + NADPH. The catalysed reaction is a 3beta-hydroxysteroid-4alpha-carboxylate + NAD(+) = a 3-oxosteroid + CO2 + NADH. It participates in steroid biosynthesis; zymosterol biosynthesis; zymosterol from lanosterol: step 4/6. In terms of biological role, catalyzes the NAD(P)(+)-dependent oxidative decarboxylation of the C4 methyl groups of 4-alpha-carboxysterols in post-squalene cholesterol biosynthesis. The chain is Sterol-4-alpha-carboxylate 3-dehydrogenase, decarboxylating (nsdhl) from Dictyostelium discoideum (Social amoeba).